A 308-amino-acid chain; its full sequence is tRNA dimethylallyltransferase (308 aa).

Position 9–16 (9–16 (GPTAVGKT)) interacts with ATP. Residue 11 to 16 (TAVGKT) participates in substrate binding. The tract at residues 34–37 (DSMQ) is interaction with substrate tRNA.

Belongs to the IPP transferase family. Monomer. Requires Mg(2+) as cofactor.

The catalysed reaction is adenosine(37) in tRNA + dimethylallyl diphosphate = N(6)-dimethylallyladenosine(37) in tRNA + diphosphate. Functionally, catalyzes the transfer of a dimethylallyl group onto the adenine at position 37 in tRNAs that read codons beginning with uridine, leading to the formation of N6-(dimethylallyl)adenosine (i(6)A). The sequence is that of tRNA dimethylallyltransferase from Lactobacillus delbrueckii subsp. bulgaricus (strain ATCC 11842 / DSM 20081 / BCRC 10696 / JCM 1002 / NBRC 13953 / NCIMB 11778 / NCTC 12712 / WDCM 00102 / Lb 14).